We begin with the raw amino-acid sequence, 216 residues long: ATP phosphoribosyltransferase (216 aa).

The protein belongs to the ATP phosphoribosyltransferase family. Short subfamily. As to quaternary structure, heteromultimer composed of HisG and HisZ subunits.

The protein localises to the cytoplasm. It catalyses the reaction 1-(5-phospho-beta-D-ribosyl)-ATP + diphosphate = 5-phospho-alpha-D-ribose 1-diphosphate + ATP. It functions in the pathway amino-acid biosynthesis; L-histidine biosynthesis; L-histidine from 5-phospho-alpha-D-ribose 1-diphosphate: step 1/9. Catalyzes the condensation of ATP and 5-phosphoribose 1-diphosphate to form N'-(5'-phosphoribosyl)-ATP (PR-ATP). Has a crucial role in the pathway because the rate of histidine biosynthesis seems to be controlled primarily by regulation of HisG enzymatic activity. The polypeptide is ATP phosphoribosyltransferase (Nitrosomonas europaea (strain ATCC 19718 / CIP 103999 / KCTC 2705 / NBRC 14298)).